Reading from the N-terminus, the 233-residue chain is Guanylate kinase (233 aa).

The region spanning 3 to 184 (GTIFIISAPS…AVEQLRAIVL (182 aa)) is the Guanylate kinase-like domain. 10 to 17 (APSGSGKS) is a binding site for ATP.

The protein belongs to the guanylate kinase family.

The protein localises to the cytoplasm. It catalyses the reaction GMP + ATP = GDP + ADP. Its function is as follows. Essential for recycling GMP and indirectly, cGMP. This Koribacter versatilis (strain Ellin345) protein is Guanylate kinase.